Consider the following 250-residue polypeptide: MTSIHSPVTRKEDTELKRPDLRGKFVCSSCSQNFQHSASLNRHRQLMHSNEHTCMMCERALNQKETIREHMRNEHNLAQVFTCGCCNWTFASKRQLTEHTKCIQGTGAPGDTIPIAKSINAPGSLIQSTIQGTPPVVKTGRKRPMGGSLSPSSSVSTSISSRDASGSPPPTEEEAERKVLFDNAVDTILQSKFFTYQQITEVDTWVKIIESANTLADTLQRIKKSQKVKAEGPAVESKMIPEKHVKQEIE.

2 C2H2-type zinc fingers span residues 25 to 48 and 52 to 75; these read FVCSSCSQNFQHSASLNRHRQLMH and HTCMMCERALNQKETIREHMRNEH. The C2H2-type 3; degenerate zinc-finger motif lies at 81–104; sequence FTCGCCNWTFASKRQLTEHTKCIQ. 2 disordered regions span residues 126–177 and 226–250; these read IQST…EAER and QKVKAEGPAVESKMIPEKHVKQEIE. Low complexity predominate over residues 148–165; sequence SLSPSSSVSTSISSRDAS. Basic and acidic residues predominate over residues 239–250; the sequence is MIPEKHVKQEIE.

Its function is as follows. Involved in regulating left/right asymmetric differentiation of the gustatory ASE neurons. Plays a role in modulating expression of LIM/homeobox protein lim-6. This Caenorhabditis elegans protein is Zinc finger protein lsy-27.